A 629-amino-acid polypeptide reads, in one-letter code: Chaperone protein HtpG (629 aa).

Positions 1–343 (MQKQTLSFQA…SSDLPLNVSR (343 aa)) are a; substrate-binding. A b region spans residues 344–558 (ELLQESRAVK…DGDMSTQLAR (215 aa)). The tract at residues 559-629 (MLKQAGQTVP…YVRRVNALLV (71 aa)) is c.

This sequence belongs to the heat shock protein 90 family. In terms of assembly, homodimer.

The protein resides in the cytoplasm. Its function is as follows. Molecular chaperone. Has ATPase activity. This is Chaperone protein HtpG from Polaromonas naphthalenivorans (strain CJ2).